The following is a 492-amino-acid chain: FAD-containing monooxygenase EthA (492 aa).

FAD is bound by residues S15, E36, 44 to 47 (TWDL), D56, and V104. Residue 54–56 (RSD) coordinates NADP(+). Residues 183–189 (SGATAVT) and 207–208 (RS) contribute to the NADP(+) site.

This sequence belongs to the FAD-binding monooxygenase family. Requires FAD as cofactor.

The protein localises to the cell membrane. The catalysed reaction is ethionamide + NADPH + O2 + H(+) = ethionamide S-oxide + NADP(+) + H2O. Monooxygenase able to convert a wide range of ketones to the corresponding esters or lactones via a Baeyer-Villiger oxidation reaction. Can act on long-chain aliphatic ketones (2-hexanone to 2-dodecanone) and on aromatic ketones (phenylacetone and benzylacetone). Is also able to catalyze enantioselective sulfoxidation of methyl-p-tolylsulfide. In vivo, likely functions as a BVMO, but the exact nature of the physiological substrate(s) remains to be established. Functionally, is responsible for the activation of several thiocarbamide-containing pro-drugs, such as ethionamide (ETH), isoxyl (ISO) and thiacetazone (TAC), into reactive species. This chain is FAD-containing monooxygenase EthA (ethA), found in Mycolicibacterium smegmatis (strain ATCC 700084 / mc(2)155) (Mycobacterium smegmatis).